A 144-amino-acid chain; its full sequence is Large ribosomal subunit protein uL15 (144 aa).

A disordered region spans residues 1–56 (MELNNLKPAAGAKHAKRRVGRGIGSGLGKTAGRGHKGQKSRSGGFHKVGFEGGQMP). Over residues 21–31 (RGIGSGLGKTA) the composition is skewed to gly residues.

The protein belongs to the universal ribosomal protein uL15 family. Part of the 50S ribosomal subunit.

Binds to the 23S rRNA. The polypeptide is Large ribosomal subunit protein uL15 (Burkholderia multivorans (strain ATCC 17616 / 249)).